A 390-amino-acid polypeptide reads, in one-letter code: Protein arginine N-methyltransferase 1.1 (390 aa).

Over residues 1 to 10 (MTKNSNHDEN) the composition is skewed to basic and acidic residues. The segment at 1–59 (MTKNSNHDENEFISFEPNQNTKIRFEDADEDEVAEGSGVAGEETPQDESMFDAGESADT) is disordered. The SAM-dependent MTase PRMT-type domain maps to 69–390 (ADYYFDSYSH…ISRTQHYKMR (322 aa)). Catalysis depends on residues glutamate 181 and glutamate 190.

The protein belongs to the class I-like SAM-binding methyltransferase superfamily. Protein arginine N-methyltransferase family. In terms of assembly, interacts with PRMT12, MBD7 and FIB2.

The protein resides in the nucleus. The protein localises to the cytoplasm. It carries out the reaction L-arginyl-[protein] + 2 S-adenosyl-L-methionine = N(omega),N(omega)-dimethyl-L-arginyl-[protein] + 2 S-adenosyl-L-homocysteine + 2 H(+). Methylates (mono and asymmetric dimethylation) the guanidino nitrogens of arginyl residues present in a glycine and arginine-rich domain. Type I arginine methyltransferase active on both histones and non-histone proteins. Required for leaves and flowers development. Mediates the methylation of MBD7 and MED36A. This chain is Protein arginine N-methyltransferase 1.1 (PRMT11), found in Arabidopsis thaliana (Mouse-ear cress).